The chain runs to 1084 residues: TNF receptor-associated factor family protein DDB_G0272098 (1084 aa).

Positions 19-103 (YYCPDCGELL…KNRYYETKNF (85 aa)) constitute an LIM zinc-binding domain. 2 TRAF-type zinc fingers span residues 122 to 190 (KHIK…IDHE) and 191 to 248 (IHLS…YNMS). The stretch at 265 to 321 (IEEQNQDIKELHNFIENHLSKKFIDLDTIVNIQKYLIKNKNQKISQLTEIIKRVDNS) forms a coiled coil. Disordered regions lie at residues 348 to 392 (YKNS…NINE), 490 to 523 (IRQQ…NTTI), 537 to 656 (NNNI…KDGL), and 709 to 897 (SIVE…NDDD). Low complexity-rich tracts occupy residues 349–375 (KNSN…TNEN), 492–509 (QQQQ…QQQQ), 537–549 (NNNI…NNNK), and 556–570 (ITAA…TTST). Positions 489–553 (LIRQQQQQQQ…NNNNNKNNDD (65 aa)) form a coiled coil. Polar residues predominate over residues 571–586 (HTILNGTNNEASMTDI). Positions 587 to 637 (NETTSTTTTAETTEATASESTEESNNTAETTTTTTTTTTTITTAAETVNST) are enriched in low complexity. Positions 644–656 (TSEKVEEKGKDGL) are enriched in basic and acidic residues. A coiled-coil region spans residues 735–852 (NGNENENENE…NNNNNNNENV (118 aa)). The span at 739–757 (NENENENENENENENENEN) shows a compositional bias: acidic residues. Residues 774–785 (SNINTSNDTEPT) show a composition bias toward polar residues. Positions 790–799 (EDIKKNKENE) are enriched in basic and acidic residues. Low complexity predominate over residues 809–849 (NNNIKSVEDTNNNNNNNNNNNNNNNNNNNNNNNNNNNNNNN). Basic and acidic residues-rich tracts occupy residues 853 to 864 (YDIKKDRNRENV) and 875 to 892 (ENGK…SEDK). The MATH domain maps to 909–1042 (IFRNQILFKD…DNCFIVNLEV (134 aa)). Residues 1056–1084 (LLQKSSPPAATTTTTTSSSSSKTTPKTKR) form a disordered region. The span at 1059 to 1084 (KSSPPAATTTTTTSSSSSKTTPKTKR) shows a compositional bias: low complexity.

Belongs to the TNF receptor-associated factor family.

The protein resides in the cytoplasm. In terms of biological role, probable adapter protein and signal transducer that links members of the tumor necrosis factor receptor family to different signaling pathways by association with the receptor cytoplasmic domain and kinases. This is TNF receptor-associated factor family protein DDB_G0272098 from Dictyostelium discoideum (Social amoeba).